The primary structure comprises 355 residues: MFTLSDFDFNLPPELIAQTALPDRTASRLLEVDGSVAPARLVDRHFAELPSCIAPGDLLVFNDTKVLKARFFGQKASGGKIEVLIERVTGTHTALAQIRASKSPGAGTTLRLADAFDVTVGERVEPFFTLHFPAPCLDLIEQHGRLPLPPYIEHDADATDETRYQTVYASNPGAVAAPTAGLHFDQPLLDKLDAMGVERATLTLHVGAGTFQPVRVENIAEHKMHSEWYDLPQSLVDKIAATRARGGNVIAVGTTSMRALEAAARSADEAGRPLAATQAETDIFITPGYRFRVVDRLVTNFHLPKSTLLMLVSAFAGVETIRAAYRHAIEERYRFFSYGDAMLLTRRDTPEAPGA.

This sequence belongs to the QueA family. Monomer.

The protein resides in the cytoplasm. It catalyses the reaction 7-aminomethyl-7-carbaguanosine(34) in tRNA + S-adenosyl-L-methionine = epoxyqueuosine(34) in tRNA + adenine + L-methionine + 2 H(+). It functions in the pathway tRNA modification; tRNA-queuosine biosynthesis. Functionally, transfers and isomerizes the ribose moiety from AdoMet to the 7-aminomethyl group of 7-deazaguanine (preQ1-tRNA) to give epoxyqueuosine (oQ-tRNA). This chain is S-adenosylmethionine:tRNA ribosyltransferase-isomerase, found in Burkholderia orbicola (strain AU 1054).